The following is a 263-amino-acid chain: DNA repair protein RecO (263 aa).

Residues 243-263 (DRKETARETVPTSDGTASNAV) are disordered. Residues 252–263 (VPTSDGTASNAV) show a composition bias toward polar residues.

It belongs to the RecO family.

Its function is as follows. Involved in DNA repair and RecF pathway recombination. This is DNA repair protein RecO from Neisseria meningitidis serogroup C / serotype 2a (strain ATCC 700532 / DSM 15464 / FAM18).